The sequence spans 299 residues: Fructose-1,6-bisphosphatase class 1 (299 aa).

Residues glutamate 79, aspartate 98, leucine 100, and aspartate 101 each coordinate Mg(2+). Substrate is bound by residues 101 to 104, tyrosine 207, and lysine 238; that span reads DGSS. Mg(2+) is bound at residue glutamate 244.

The protein belongs to the FBPase class 1 family. Homotetramer. Requires Mg(2+) as cofactor.

The protein resides in the cytoplasm. The enzyme catalyses beta-D-fructose 1,6-bisphosphate + H2O = beta-D-fructose 6-phosphate + phosphate. It functions in the pathway carbohydrate biosynthesis; gluconeogenesis. This is Fructose-1,6-bisphosphatase class 1 from Campylobacter curvus (strain 525.92).